The following is a 213-amino-acid chain: ATP phosphoribosyltransferase (213 aa).

It belongs to the ATP phosphoribosyltransferase family. Short subfamily. Heteromultimer composed of HisG and HisZ subunits.

The protein localises to the cytoplasm. The enzyme catalyses 1-(5-phospho-beta-D-ribosyl)-ATP + diphosphate = 5-phospho-alpha-D-ribose 1-diphosphate + ATP. It participates in amino-acid biosynthesis; L-histidine biosynthesis; L-histidine from 5-phospho-alpha-D-ribose 1-diphosphate: step 1/9. Its function is as follows. Catalyzes the condensation of ATP and 5-phosphoribose 1-diphosphate to form N'-(5'-phosphoribosyl)-ATP (PR-ATP). Has a crucial role in the pathway because the rate of histidine biosynthesis seems to be controlled primarily by regulation of HisG enzymatic activity. The sequence is that of ATP phosphoribosyltransferase from Saccharophagus degradans (strain 2-40 / ATCC 43961 / DSM 17024).